Here is a 294-residue protein sequence, read N- to C-terminus: Ribosomal RNA small subunit methyltransferase A (294 aa).

6 residues coordinate S-adenosyl-L-methionine: Asn31, Leu33, Gly58, Glu79, Asp111, and Asn136.

The protein belongs to the class I-like SAM-binding methyltransferase superfamily. rRNA adenine N(6)-methyltransferase family. RsmA subfamily.

The protein resides in the cytoplasm. It catalyses the reaction adenosine(1518)/adenosine(1519) in 16S rRNA + 4 S-adenosyl-L-methionine = N(6)-dimethyladenosine(1518)/N(6)-dimethyladenosine(1519) in 16S rRNA + 4 S-adenosyl-L-homocysteine + 4 H(+). Specifically dimethylates two adjacent adenosines (A1518 and A1519) in the loop of a conserved hairpin near the 3'-end of 16S rRNA in the 30S particle. May play a critical role in biogenesis of 30S subunits. In Lactobacillus helveticus (strain DPC 4571), this protein is Ribosomal RNA small subunit methyltransferase A.